Here is a 214-residue protein sequence, read N- to C-terminus: Uracil phosphoribosyltransferase (214 aa).

5-phospho-alpha-D-ribose 1-diphosphate contacts are provided by residues arginine 107 and 135-143 (DPMLATGKT). Uracil contacts are provided by residues isoleucine 198 and 203–205 (GDA). Position 204 (aspartate 204) interacts with 5-phospho-alpha-D-ribose 1-diphosphate.

This sequence belongs to the UPRTase family. Mg(2+) serves as cofactor.

It catalyses the reaction UMP + diphosphate = 5-phospho-alpha-D-ribose 1-diphosphate + uracil. The protein operates within pyrimidine metabolism; UMP biosynthesis via salvage pathway; UMP from uracil: step 1/1. With respect to regulation, allosterically activated by GTP. Catalyzes the conversion of uracil and 5-phospho-alpha-D-ribose 1-diphosphate (PRPP) to UMP and diphosphate. The protein is Uracil phosphoribosyltransferase of Aeropyrum pernix (strain ATCC 700893 / DSM 11879 / JCM 9820 / NBRC 100138 / K1).